Consider the following 416-residue polypeptide: Enterobactin exporter EntS (416 aa).

The Cytoplasmic segment spans residues 1-21 (MNKQSWLLNLSLLKTHPAFRA). Residues 22 to 42 (VFLARFISIVSLGLLGVAVPV) traverse the membrane as a helical segment. Residues 43-55 (QIQMMTHSTWQVG) are Periplasmic-facing. The helical transmembrane segment at 56 to 76 (LSVTLTGGAMFVGLMVGGVLA) threads the bilayer. Residues 77–83 (DRYERKK) lie on the Cytoplasmic side of the membrane. Residues 84 to 104 (VILLARGTCGIGFIGLCLNAL) form a helical membrane-spanning segment. Over 105 to 109 (LPEPS) the chain is Periplasmic. The helical transmembrane segment at 110 to 130 (LLAIYLLGLWDGFFASLGVTA) threads the bilayer. The Cytoplasmic portion of the chain corresponds to 131–156 (LLAATPALVGRENLMQAGAITMLTVR). The chain crosses the membrane as a helical span at residues 157–177 (LGSVISPMIGGLLLATGGVAW). Asparagine 178 is a topological domain (periplasmic). A helical transmembrane segment spans residues 179 to 199 (YGLAAAGTFITLLPLLSLPAL). The Cytoplasmic segment spans residues 200–218 (PPPPQPREHPLKSLLAGFR). The helical transmembrane segment at 219-239 (FLLASPLVGGIALLGGLLTMA) threads the bilayer. Topologically, residues 240–256 (SAVRVLYPALADNWQMS) are periplasmic. A helical membrane pass occupies residues 257 to 277 (AAQIGFLYAAIPLGAAIGALT). The Cytoplasmic portion of the chain corresponds to 278–287 (SGKLAHSARP). The helical transmembrane segment at 288 to 307 (GLLMLLSTLGSFLAIGLFGL) threads the bilayer. Residues 308-313 (MPMWIL) lie on the Periplasmic side of the membrane. The helical transmembrane segment at 314–336 (GVVCLALFGWLSAVSSLLQYTML) threads the bilayer. Topologically, residues 337–356 (QTQTPEAMLGRINGLWTAQN) are cytoplasmic. The chain crosses the membrane as a helical span at residues 357-377 (VTGDAIGAALLGGLGAMMTPV). Position 378 (alanine 378) is a topological domain, periplasmic. A helical transmembrane segment spans residues 379–399 (SASASGFGLLIIGVLLLLVLV). Residues 400–416 (ELRRFRQTPPQVTASDG) are Cytoplasmic-facing.

It belongs to the major facilitator superfamily. EntS (TC 2.A.1.38) family.

Its subcellular location is the cell inner membrane. Component of an export pathway for enterobactin. This is Enterobactin exporter EntS from Escherichia coli O157:H7.